Here is a 162-residue protein sequence, read N- to C-terminus: Nucleotide-binding protein SGR_2909 (162 aa).

This sequence belongs to the YajQ family.

Functionally, nucleotide-binding protein. This chain is Nucleotide-binding protein SGR_2909, found in Streptomyces griseus subsp. griseus (strain JCM 4626 / CBS 651.72 / NBRC 13350 / KCC S-0626 / ISP 5235).